The following is a 565-amino-acid chain: Inositol-3-phosphate synthase (565 aa).

NAD(+) contacts are provided by glycine 70, glycine 71, asparagine 72, asparagine 73, aspartate 144, serine 180, isoleucine 181, glutamine 191, arginine 194, threonine 231, alanine 232, asparagine 233, threonine 234, glycine 282, serine 283, aspartate 307, serine 310, asparagine 341, asparagine 342, aspartate 343, lysine 356, glycine 394, aspartate 395, aspartate 423, and serine 424. The residue at position 536 (serine 536) is a Phosphoserine. Residues 546–565 (LHANGHSNGSAKLATNGNGH) form a disordered region. Over residues 550–565 (GHSNGSAKLATNGNGH) the composition is skewed to polar residues.

This sequence belongs to the myo-inositol 1-phosphate synthase family. NAD(+) serves as cofactor. In terms of tissue distribution, higher expression in adult heads than bodies.

The protein localises to the cytoplasm. The catalysed reaction is D-glucose 6-phosphate = 1D-myo-inositol 3-phosphate. The protein operates within polyol metabolism; myo-inositol biosynthesis; myo-inositol from D-glucose 6-phosphate: step 1/2. Functionally, key enzyme in myo-inositol biosynthesis pathway that catalyzes the conversion of glucose 6-phosphate to 1-myo-inositol 1-phosphate in a NAD-dependent manner. Rate-limiting enzyme in the synthesis of all inositol-containing compounds. The protein is Inositol-3-phosphate synthase (Inos) of Drosophila melanogaster (Fruit fly).